The following is a 335-amino-acid chain: tRNA-dihydrouridine(20/20a) synthase (335 aa).

FMN is bound by residues Pro19–Met21 and Gln72. The Proton donor role is filled by Cys102. FMN contacts are provided by residues Lys141, His173, Asn213–Gly215, and Gly235–Arg236.

This sequence belongs to the Dus family. DusA subfamily. Requires FMN as cofactor.

It carries out the reaction 5,6-dihydrouridine(20) in tRNA + NADP(+) = uridine(20) in tRNA + NADPH + H(+). It catalyses the reaction 5,6-dihydrouridine(20) in tRNA + NAD(+) = uridine(20) in tRNA + NADH + H(+). The enzyme catalyses 5,6-dihydrouridine(20a) in tRNA + NADP(+) = uridine(20a) in tRNA + NADPH + H(+). The catalysed reaction is 5,6-dihydrouridine(20a) in tRNA + NAD(+) = uridine(20a) in tRNA + NADH + H(+). Its function is as follows. Catalyzes the synthesis of 5,6-dihydrouridine (D), a modified base found in the D-loop of most tRNAs, via the reduction of the C5-C6 double bond in target uridines. Specifically modifies U20 and U20a in tRNAs. The polypeptide is tRNA-dihydrouridine(20/20a) synthase (Xanthomonas campestris pv. campestris (strain ATCC 33913 / DSM 3586 / NCPPB 528 / LMG 568 / P 25)).